The chain runs to 314 residues: 2,3-dihydroxyphenylpropionate/2,3-dihydroxicinnamic acid 1,2-dioxygenase (314 aa).

The active-site Proton donor is the histidine 115. Residue histidine 179 is the Proton acceptor of the active site.

It belongs to the LigB/MhpB extradiol dioxygenase family. In terms of assembly, homotetramer. Requires Fe(2+) as cofactor.

It catalyses the reaction 3-(2,3-dihydroxyphenyl)propanoate + O2 = (2Z,4E)-2-hydroxy-6-oxonona-2,4-dienedioate + H(+). The enzyme catalyses (2E)-3-(2,3-dihydroxyphenyl)prop-2-enoate + O2 = (2Z,4E,7E)-2-hydroxy-6-oxonona-2,4,7-trienedioate + H(+). It functions in the pathway aromatic compound metabolism; 3-phenylpropanoate degradation. Catalyzes the non-heme iron(II)-dependent oxidative cleavage of 2,3-dihydroxyphenylpropionic acid and 2,3-dihydroxicinnamic acid into 2-hydroxy-6-ketononadienedioate and 2-hydroxy-6-ketononatrienedioate, respectively. The polypeptide is 2,3-dihydroxyphenylpropionate/2,3-dihydroxicinnamic acid 1,2-dioxygenase (Klebsiella pneumoniae subsp. pneumoniae (strain ATCC 700721 / MGH 78578)).